The following is a 277-amino-acid chain: Indole-3-glycerol phosphate synthase (277 aa).

Belongs to the TrpC family.

It carries out the reaction 1-(2-carboxyphenylamino)-1-deoxy-D-ribulose 5-phosphate + H(+) = (1S,2R)-1-C-(indol-3-yl)glycerol 3-phosphate + CO2 + H2O. Its pathway is amino-acid biosynthesis; L-tryptophan biosynthesis; L-tryptophan from chorismate: step 4/5. The polypeptide is Indole-3-glycerol phosphate synthase (Pseudomonas putida (strain ATCC 700007 / DSM 6899 / JCM 31910 / BCRC 17059 / LMG 24140 / F1)).